Reading from the N-terminus, the 122-residue chain is uncharacterized protein (122 aa).

A compositionally biased stretch (basic and acidic residues) spans 1–15 (MAEPGGRGDYHKDGR). Positions 1–26 (MAEPGGRGDYHKDGRPPSLSRSPLFT) are disordered.

This is an uncharacterized protein from Macaca fascicularis (Crab-eating macaque).